A 170-amino-acid polypeptide reads, in one-letter code: Peptide deformylase (170 aa).

The Fe cation site is built by Cys93 and His135. Glu136 is a catalytic residue. Residue His139 participates in Fe cation binding.

It belongs to the polypeptide deformylase family. The cofactor is Fe(2+).

It carries out the reaction N-terminal N-formyl-L-methionyl-[peptide] + H2O = N-terminal L-methionyl-[peptide] + formate. In terms of biological role, removes the formyl group from the N-terminal Met of newly synthesized proteins. Requires at least a dipeptide for an efficient rate of reaction. N-terminal L-methionine is a prerequisite for activity but the enzyme has broad specificity at other positions. This Acidobacterium capsulatum (strain ATCC 51196 / DSM 11244 / BCRC 80197 / JCM 7670 / NBRC 15755 / NCIMB 13165 / 161) protein is Peptide deformylase.